The following is a 436-amino-acid chain: POU domain, class 2, transcription factor 3 (436 aa).

Disordered regions lie at residues methionine 1 to aspartate 40, glutamine 140 to serine 186, and alanine 256 to phenylalanine 278. The 75-residue stretch at aspartate 183 to glutamate 257 folds into the POU-specific domain. A compositionally biased stretch (low complexity) spans serine 258–serine 275. A DNA-binding region (homeobox) is located at residues lysine 281 to asparagine 340. The interval leucine 363–asparagine 421 is disordered. 2 stretches are compositionally biased toward low complexity: residues serine 381–glycine 397 and alanine 405–asparagine 421.

This sequence belongs to the POU transcription factor family. Class-2 subfamily. Interacts (via the POU domain) with POU2AF1 and POU2AF2 in a DNA-dependent manner; this interaction recruits POU2AF2 to chromatin and increases POU2F3 transactivation activity. In terms of tissue distribution, specifically expressed in epidermis and cultured keratinocytes.

It localises to the nucleus. Functionally, transcription factor that binds to the octamer motif (5'-ATTTGCAT-3') and regulates cell type-specific differentiation pathways. Involved in the regulation of keratinocytes differentiation. The POU2F3-POU2AF2/POU2AF3 complex drives the expression of tuft-cell-specific genes, a rare chemosensory cells that coordinate immune and neural functions within mucosal epithelial tissues. The chain is POU domain, class 2, transcription factor 3 from Homo sapiens (Human).